A 126-amino-acid chain; its full sequence is MSDPRYQVDVSVVTRFLADQSQPEQNRFAFAYTITVQNNGSLPAKLLSRHWVITDGDGHVEEVRGAGVVGQQPLIAAGKSHTYSSGTVMTTRVGNMQGSYQMLAEDGKQFDAVIAPFRLAVPGALH.

One can recognise an ApaG domain in the interval 2–126; it reads SDPRYQVDVS…FRLAVPGALH (125 aa).

The chain is Protein ApaG from Pseudomonas fluorescens (strain ATCC BAA-477 / NRRL B-23932 / Pf-5).